A 463-amino-acid polypeptide reads, in one-letter code: Fumarate hydratase class II (463 aa).

Substrate is bound by residues 98–100 (SGT), 129–132 (HPND), 139–141 (SSN), and T187. The active-site Proton donor/acceptor is H188. The active site involves S318. Substrate-binding positions include S319 and 324-326 (KVN).

It belongs to the class-II fumarase/aspartase family. Fumarase subfamily. In terms of assembly, homotetramer.

It localises to the cytoplasm. The enzyme catalyses (S)-malate = fumarate + H2O. The protein operates within carbohydrate metabolism; tricarboxylic acid cycle; (S)-malate from fumarate: step 1/1. Its function is as follows. Involved in the TCA cycle. Catalyzes the stereospecific interconversion of fumarate to L-malate. The polypeptide is Fumarate hydratase class II (Rhizobium meliloti (strain 1021) (Ensifer meliloti)).